The following is a 416-amino-acid chain: Lipoyl synthase, mitochondrial (416 aa).

The transit peptide at 1 to 33 directs the protein to the mitochondrion; that stretch reads MAAASTNRLRLLYTSTRASLPQSTPSILTTRTY. The segment at 20-52 is disordered; sequence LPQSTPSILTTRTYATTDSSTSATSTPKPRRRT. The segment covering 29 to 46 has biased composition (low complexity); that stretch reads TTRTYATTDSSTSATSTP. [4Fe-4S] cluster is bound by residues Cys133, Cys138, Cys144, Cys164, Cys168, Cys171, and Ser379. The region spanning 147–368 is the Radical SAM core domain; the sequence is GGDKAAATAT…QRRAEELGFL (222 aa).

It belongs to the radical SAM superfamily. Lipoyl synthase family. [4Fe-4S] cluster serves as cofactor.

Its subcellular location is the mitochondrion. The catalysed reaction is [[Fe-S] cluster scaffold protein carrying a second [4Fe-4S](2+) cluster] + N(6)-octanoyl-L-lysyl-[protein] + 2 oxidized [2Fe-2S]-[ferredoxin] + 2 S-adenosyl-L-methionine + 4 H(+) = [[Fe-S] cluster scaffold protein] + N(6)-[(R)-dihydrolipoyl]-L-lysyl-[protein] + 4 Fe(3+) + 2 hydrogen sulfide + 2 5'-deoxyadenosine + 2 L-methionine + 2 reduced [2Fe-2S]-[ferredoxin]. The protein operates within protein modification; protein lipoylation via endogenous pathway; protein N(6)-(lipoyl)lysine from octanoyl-[acyl-carrier-protein]: step 2/2. Functionally, catalyzes the radical-mediated insertion of two sulfur atoms into the C-6 and C-8 positions of the octanoyl moiety bound to the lipoyl domains of lipoate-dependent enzymes, thereby converting the octanoylated domains into lipoylated derivatives. The polypeptide is Lipoyl synthase, mitochondrial (Aspergillus niger (strain ATCC MYA-4892 / CBS 513.88 / FGSC A1513)).